The sequence spans 692 residues: MTDRVKSLQLLFDRPNEPLITPKGENGAIFQLTQDLLPVDYEDNGIALNNRFGEEADEKIPLKPLSNPPQFPIASQLPTDADFSLFLPRHQEMATEVIDVLMNIPENQLDDLLSSCVYARGRLNPQLFNYCYSVVLMHRRDTRNVPIQNFAETFPSKFLDSQAFAQARETAAVFPRGIPRTPIIIPRDYTATDLEEEHRLAYWREDIGINLHHWQWHLVYPFTASDRSIVAKDRRGELFFYMHQQIIARYNCERINNSLKRVKKFNNWREPIPEAYFPKLDSLTSSRGWPPRQANMTWQDLNRPVDGLNVTISDMERWRRNLEEAVSMGTVTLPDGSTRPLDIDTLGNMVEASILSPNRELYGSVHNNGHSFSAYVHDPSHRYLENFGVIADEATTMRDPFFYRWHAWVDDLFQKHKESNFVRPYSRSELENPGVQVTSVSVETQGSPQNVLSTFWMSSDVDLSRGLDFSNRGPVYARFTHLNHRPFRYVIKVNNSGNARRTTVRIFISPKFDERNLAWSLVDQRKMFIEMDRFVTPLKAGENTITRQSTESTFTIPFEQTFRDLSVQADDPRRVDLAAFNFCGCGWPQHMLVPKGTEAGAPYVFFVMLSNYDLDRIDEPGNSPEISCKEASSFCGLRDRKYPDKRAMGFPFDRPSRTATSIEDFILPNMALQDITIRLNNVVEANPRNPRT.

A propeptide spanning residues 1–97 is cleaved from the precursor; it reads MTDRVKSLQL…PRHQEMATEV (97 aa). Residues His213, His217, and His243 each coordinate Cu cation. N-linked (GlcNAc...) asparagine glycosylation is found at Asn256, Asn295, and Asn309. The Proton acceptor role is filled by Glu351. Cu cation-binding residues include His366, His370, and His406. N-linked (GlcNAc...) asparagine glycosylation occurs at Asn494. 2 disulfides stabilise this stretch: Cys583–Cys628 and Cys585–Cys635.

The protein belongs to the tyrosinase family. As to quaternary structure, heterodimer. Cu(2+) serves as cofactor.

It is found in the secreted. It carries out the reaction L-tyrosine + O2 = L-dopaquinone + H2O. It catalyses the reaction 2 L-dopa + O2 = 2 L-dopaquinone + 2 H2O. In terms of biological role, copper-containing oxidase that functions in the formation of pigments such as melanins and other polyphenolic compounds. Catalyzes the rate-limiting conversions of tyrosine to DOPA, DOPA to DOPA-quinone and possibly 5,6 dihydroxyindole to indole-5'6 quinone. Binds to the surface of hemocytes and is involved in hemocyte melanization. Binds the A.niger cell wall component alpha-1,3-glucan, a fungal pathogen-associated molecular pattern (PAMP) that activates the host immune response. The chain is Phenoloxidase subunit 2 from Galleria mellonella (Greater wax moth).